The following is a 434-amino-acid chain: Adenylosuccinate synthetase (434 aa).

Residues 22–28 (GDEGKGK) and 50–52 (GHT) each bind GTP. D23 serves as the catalytic Proton acceptor. Residues D23 and G50 each coordinate Mg(2+). IMP-binding positions include 23–26 (DEGK), 48–51 (NAGH), T139, R153, Q234, T249, and R313. Residue H51 is the Proton donor of the active site. 309–315 (ATTGRKR) lines the substrate pocket. GTP is bound by residues R315, 341-343 (KLD), and 423-425 (SVG).

This sequence belongs to the adenylosuccinate synthetase family. As to quaternary structure, homodimer. Mg(2+) serves as cofactor.

The protein resides in the cytoplasm. The catalysed reaction is IMP + L-aspartate + GTP = N(6)-(1,2-dicarboxyethyl)-AMP + GDP + phosphate + 2 H(+). It functions in the pathway purine metabolism; AMP biosynthesis via de novo pathway; AMP from IMP: step 1/2. Its function is as follows. Plays an important role in the de novo pathway of purine nucleotide biosynthesis. Catalyzes the first committed step in the biosynthesis of AMP from IMP. This Chlorobium phaeovibrioides (strain DSM 265 / 1930) (Prosthecochloris vibrioformis (strain DSM 265)) protein is Adenylosuccinate synthetase.